Here is a 420-residue protein sequence, read N- to C-terminus: D-tagatose-1,6-bisphosphate aldolase subunit GatZ (420 aa).

The protein belongs to the GatZ/KbaZ family. GatZ subfamily. In terms of assembly, forms a complex with GatY.

Its pathway is carbohydrate metabolism; D-tagatose 6-phosphate degradation; D-glyceraldehyde 3-phosphate and glycerone phosphate from D-tagatose 6-phosphate: step 2/2. In terms of biological role, component of the tagatose-1,6-bisphosphate aldolase GatYZ that is required for full activity and stability of the Y subunit. Could have a chaperone-like function for the proper and stable folding of GatY. When expressed alone, GatZ does not show any aldolase activity. Is involved in the catabolism of galactitol. This chain is D-tagatose-1,6-bisphosphate aldolase subunit GatZ, found in Escherichia coli O6:H1 (strain CFT073 / ATCC 700928 / UPEC).